The primary structure comprises 62 residues: MANIGIFFGTDTGKTRKIAKMIHKQLGELADAPVNINRTTLDDFMAYPVLLLGTPTLGDGQL.

Residues 4–62 (IGIFFGTDTGKTRKIAKMIHKQLGELADAPVNINRTTLDDFMAYPVLLLGTPTLGDGQL) enclose the Flavodoxin-like domain.

It belongs to the flavodoxin family. Requires FMN as cofactor.

Low-potential electron donor to a number of redox enzymes. NifF is the electron donor to nitrogenase. This chain is Flavodoxin (nifF), found in Klebsiella oxytoca.